The following is a 209-amino-acid chain: Cilia- and flagella-associated protein 418 (209 aa).

A required for interaction with FAM161A region spans residues 1–76 (MAKDLDELLD…LINEIFEEPD (76 aa)). The disordered stretch occupies residues 24 to 58 (LDLGERPKGDGGGGSHSGDRNGAQEKETLRSTETF). Over residues 40 to 58 (SGDRNGAQEKETLRSTETF) the composition is skewed to basic and acidic residues.

In terms of assembly, interacts (via N-terminus) with FAM161A (via central region); the interaction is direct. As to expression, expressed in multiple tissues, including the brain, kidney, lung, spleen, heart, trachea and testis. Expressed in the retina (at protein level).

The protein resides in the cytoplasm. Its subcellular location is the photoreceptor inner segment. In terms of biological role, may be involved in photoreceptor outer segment disk morphogenesis. The protein is Cilia- and flagella-associated protein 418 of Mus musculus (Mouse).